The following is a 298-amino-acid chain: Cyclin-dependent kinase 2 homolog (298 aa).

The 281-residue stretch at tyrosine 4–phenylalanine 284 folds into the Protein kinase domain. ATP contacts are provided by residues isoleucine 10 to valine 18 and lysine 32. A Phosphothreonine modification is found at threonine 14. Position 15 is a phosphotyrosine (tyrosine 15). Aspartate 125 serves as the catalytic Proton acceptor. Phosphothreonine is present on threonine 158.

This sequence belongs to the protein kinase superfamily. CMGC Ser/Thr protein kinase family. CDC2/CDKX subfamily. In terms of assembly, may form a complex composed of at least the catalytic subunit CRK2 and a cyclin. Mg(2+) is required as a cofactor.

It localises to the cytoplasm. The enzyme catalyses L-seryl-[protein] + ATP = O-phospho-L-seryl-[protein] + ADP + H(+). It catalyses the reaction L-threonyl-[protein] + ATP = O-phospho-L-threonyl-[protein] + ADP + H(+). The catalysed reaction is [DNA-directed RNA polymerase] + ATP = phospho-[DNA-directed RNA polymerase] + ADP + H(+). Its activity is regulated as follows. Phosphorylation at Thr-14 or Tyr-15 inactivates the enzyme, while phosphorylation at Thr-158 activates it. In terms of biological role, serine/threonine-protein kinase. Involved in the control of the cell cycle. Required for entry into S-phase and mitosis. Probable component of the kinase complex that phosphorylates the repetitive C-terminus of RNA polymerase II. The sequence is that of Cyclin-dependent kinase 2 homolog from Theileria parva (East coast fever infection agent).